Consider the following 310-residue polypeptide: Methionyl-tRNA formyltransferase (310 aa).

110–113 (SVLP) is a (6S)-5,6,7,8-tetrahydrofolate binding site. Residues 283 to 310 (TVQPPGKKSMNAADWARGARAEDIRRAR) are disordered. The span at 299-310 (RGARAEDIRRAR) shows a compositional bias: basic and acidic residues.

This sequence belongs to the Fmt family.

It carries out the reaction L-methionyl-tRNA(fMet) + (6R)-10-formyltetrahydrofolate = N-formyl-L-methionyl-tRNA(fMet) + (6S)-5,6,7,8-tetrahydrofolate + H(+). Its function is as follows. Attaches a formyl group to the free amino group of methionyl-tRNA(fMet). The formyl group appears to play a dual role in the initiator identity of N-formylmethionyl-tRNA by promoting its recognition by IF2 and preventing the misappropriation of this tRNA by the elongation apparatus. The sequence is that of Methionyl-tRNA formyltransferase from Mycolicibacterium gilvum (strain PYR-GCK) (Mycobacterium gilvum (strain PYR-GCK)).